A 161-amino-acid polypeptide reads, in one-letter code: Regulator of ribonuclease activity A (161 aa).

Belongs to the RraA family. Homotrimer. Binds to both RNA-binding sites in the C-terminal region of Rne and to RhlB.

It localises to the cytoplasm. Its function is as follows. Globally modulates RNA abundance by binding to RNase E (Rne) and regulating its endonucleolytic activity. Can modulate Rne action in a substrate-dependent manner by altering the composition of the degradosome. Modulates RNA-binding and helicase activities of the degradosome. This Shigella flexneri serotype 5b (strain 8401) protein is Regulator of ribonuclease activity A.